Consider the following 510-residue polypeptide: Acyl-CoA desaturase 1 (510 aa).

Topologically, residues Met-1–Asn-112 are cytoplasmic. The chain crosses the membrane as a helical span at residues Trp-113 to Gly-133. Residues Lys-134 to His-138 are Lumenal-facing. Residues Leu-139–Gly-159 traverse the membrane as a helical segment. The Cytoplasmic portion of the chain corresponds to Tyr-160–His-255. Fe cation is bound by residues His-161, His-166, His-198, His-201, and His-202. Residues His-161 to His-166 carry the Histidine box-1 motif. Positions His-198–His-202 match the Histidine box-2 motif. Residues Tyr-256 to Phe-276 form a helical membrane-spanning segment. The Lumenal portion of the chain corresponds to Asn-277 to Met-280. Residues Gly-281–Ile-301 traverse the membrane as a helical segment. The Cytoplasmic portion of the chain corresponds to Asn-302 to Phe-510. Fe cation-binding residues include His-306, His-335, His-338, and His-339. Residues His-335 to His-339 carry the Histidine box-3 motif. One can recognise a Cytochrome b5 heme-binding domain in the interval Leu-409–Lys-487. The heme site is built by His-444 and His-470.

The protein belongs to the fatty acid desaturase type 1 family. Fe(2+) is required as a cofactor.

It localises to the endoplasmic reticulum membrane. It carries out the reaction octadecanoyl-CoA + 2 Fe(II)-[cytochrome b5] + O2 + 2 H(+) = (9Z)-octadecenoyl-CoA + 2 Fe(III)-[cytochrome b5] + 2 H2O. The catalysed reaction is hexadecanoyl-CoA + 2 Fe(II)-[cytochrome b5] + O2 + 2 H(+) = (9Z)-hexadecenoyl-CoA + 2 Fe(III)-[cytochrome b5] + 2 H2O. In terms of biological role, stearoyl-CoA desaturase that utilizes O(2) and electrons from reduced cytochrome b5 to introduce the first double bond into saturated fatty acyl-CoA substrates. Catalyzes the insertion of a cis double bond at the delta-9 position into fatty acyl-CoA substrates including palmitoyl-CoA and stearoyl-CoA. Required for the biosynthesis of membrane phospholipids, cholesterol esters and triglycerides. Regulates fatty acid desaturation, that is, the ratio of unsaturated versus saturated fatty acyl chains, by competing with the acyltransferase STC1 for the common substrate C16:0-CoA. SCT1 sequesters C16:0-CoA into lipids, thereby shielding it from desaturation by OLE1. The chain is Acyl-CoA desaturase 1 (OLE1) from Saccharomyces cerevisiae (strain ATCC 204508 / S288c) (Baker's yeast).